The following is a 365-amino-acid chain: Probable G-protein coupled receptor 142 (365 aa).

Topologically, residues 1–66 are extracellular; that stretch reads MHLNSNPNSY…WPESPERSPC (66 aa). The N-linked (GlcNAc...) asparagine glycan is linked to Asn44. Residues 67-87 traverse the membrane as a helical segment; that stretch reads VAGIIPVIYYSVLLSLGLPVA. The Cytoplasmic portion of the chain corresponds to 88–102; it reads LARLAARTRKPSYHY. The helical transmembrane segment at 103–123 threads the bilayer; sequence LLALTASDIVTQVIIVFVGFL. The Extracellular portion of the chain corresponds to 124–140; sequence LQGAVLARQVPQAVVRT. A helical membrane pass occupies residues 141–161; sequence ANILEFAANHASVWIAVLFTV. Topologically, residues 162–185 are cytoplasmic; it reads DRYNALCRPLRHRATSSPGRTHRA. Residues 186 to 206 traverse the membrane as a helical segment; that stretch reads IAAVIGVTLLTGIPFYWWLDV. The Extracellular portion of the chain corresponds to 207 to 224; the sequence is WRDADPPSTMDKLLKWAH. A helical transmembrane segment spans residues 225–245; sequence CLIVYFIPCNVFLVTNSAIIL. Over 246–264 the chain is Cytoplasmic; that stretch reads RLRKRGQRGLRPLVSKSTA. A helical transmembrane segment spans residues 265–285; it reads ILLGVTSLFALLWAPRIIVML. Topologically, residues 286 to 304 are extracellular; that stretch reads YHLYVAPVHRDWRVHLALD. A helical transmembrane segment spans residues 305–325; the sequence is IANMLAMLNTEVNFGLYCFIS. The Cytoplasmic portion of the chain corresponds to 326–365; the sequence is KTFRATVRQVICDVHMACALKSQPKQTVVELMLKSVGTEL.

This sequence belongs to the G-protein coupled receptor 1 family.

The protein localises to the cell membrane. Orphan receptor. The chain is Probable G-protein coupled receptor 142 (Gpr142) from Mus musculus (Mouse).